Here is a 482-residue protein sequence, read N- to C-terminus: tRNA sulfurtransferase (482 aa).

The THUMP domain maps to 61–165; it reads NQVLTAVTHT…NEKLNLVIAR (105 aa). ATP-binding positions include 183–184, Lys265, Gly287, and Gln296; that span reads LI. A disulfide bond links Cys344 and Cys456. The region spanning 404–482 is the Rhodanese domain; it reads LGSDVVVLDI…GYKNVKVYRP (79 aa). Cys456 acts as the Cysteine persulfide intermediate in catalysis.

This sequence belongs to the ThiI family.

The protein resides in the cytoplasm. It catalyses the reaction [ThiI sulfur-carrier protein]-S-sulfanyl-L-cysteine + a uridine in tRNA + 2 reduced [2Fe-2S]-[ferredoxin] + ATP + H(+) = [ThiI sulfur-carrier protein]-L-cysteine + a 4-thiouridine in tRNA + 2 oxidized [2Fe-2S]-[ferredoxin] + AMP + diphosphate. The catalysed reaction is [ThiS sulfur-carrier protein]-C-terminal Gly-Gly-AMP + S-sulfanyl-L-cysteinyl-[cysteine desulfurase] + AH2 = [ThiS sulfur-carrier protein]-C-terminal-Gly-aminoethanethioate + L-cysteinyl-[cysteine desulfurase] + A + AMP + 2 H(+). Its pathway is cofactor biosynthesis; thiamine diphosphate biosynthesis. Functionally, catalyzes the ATP-dependent transfer of a sulfur to tRNA to produce 4-thiouridine in position 8 of tRNAs, which functions as a near-UV photosensor. Also catalyzes the transfer of sulfur to the sulfur carrier protein ThiS, forming ThiS-thiocarboxylate. This is a step in the synthesis of thiazole, in the thiamine biosynthesis pathway. The sulfur is donated as persulfide by IscS. The chain is tRNA sulfurtransferase from Aliivibrio salmonicida (strain LFI1238) (Vibrio salmonicida (strain LFI1238)).